Reading from the N-terminus, the 955-residue chain is Beta-agarase B (955 aa).

It belongs to the glycosyl hydrolase 50 family.

It carries out the reaction Hydrolysis of (1-&gt;4)-beta-D-galactosidic linkages in agarose, giving the tetramer as the predominant product.. In terms of biological role, hydrolyzes agarose to yield predominantly neoagarotetraose and neoagarohexaose. The sequence is that of Beta-agarase B (agaB) from Vibrio sp. (strain JT0107).